The primary structure comprises 520 residues: Pleckstrin homology domain-containing family A member 8 (520 aa).

Residues 1-93 (MEGVLYKWTN…WLVALGSAKA (93 aa)) enclose the PH domain. A Phosphothreonine modification is found at threonine 139. Serine 145 carries the phosphoserine modification. At threonine 153 the chain carries Phosphothreonine. The span at 275–285 (GEESLGNHDSD) shows a compositional bias: basic and acidic residues. Residues 275 to 305 (GEESLGNHDSDLAQPELHSTSSSPESHWEED) are disordered. Residues 311–520 (TFFSTMNTSF…VHGLESDEVV (210 aa)) are glycolipid transfer protein homology domain.

As to quaternary structure, homodimer. Interacts with ARF1; the interaction together with phosphatidylinositol 4-phosphate binding is required for FAPP2 GlcCer transfer ability.

The protein localises to the cytoplasm. It is found in the golgi apparatus. Its subcellular location is the trans-Golgi network membrane. It localises to the membrane. Functionally, cargo transport protein that is required for apical transport from the trans-Golgi network (TGN). Transports AQP2 from the trans-Golgi network (TGN) to sites of AQP2 phosphorylation. Mediates the non-vesicular transport of glucosylceramide (GlcCer) from the trans-Golgi network (TGN) to the plasma membrane and plays a pivotal role in the synthesis of complex glycosphingolipids. Binding of both phosphatidylinositol 4-phosphate (PIP) and ARF1 are essential for the GlcCer transfer ability. Also required for primary cilium formation, possibly by being involved in the transport of raft lipids to the apical membrane, and for membrane tubulation. The sequence is that of Pleckstrin homology domain-containing family A member 8 (PLEKHA8) from Bos taurus (Bovine).